The following is a 199-amino-acid chain: Ribosome maturation factor RimM (199 aa).

Residues 100–195 form the PRC barrel domain; the sequence is ADEWYPKDLI…YLTLDPPGGL (96 aa).

It belongs to the RimM family. Binds ribosomal protein uS19.

Its subcellular location is the cytoplasm. Its function is as follows. An accessory protein needed during the final step in the assembly of 30S ribosomal subunit, possibly for assembly of the head region. Essential for efficient processing of 16S rRNA. May be needed both before and after RbfA during the maturation of 16S rRNA. It has affinity for free ribosomal 30S subunits but not for 70S ribosomes. This is Ribosome maturation factor RimM from Bifidobacterium longum (strain DJO10A).